The primary structure comprises 429 residues: Serine--tRNA ligase (429 aa).

Residue 235 to 237 coordinates L-serine; sequence TAE. Residue 266-268 coordinates ATP; the sequence is RSE. L-serine is bound at residue Glu289. 353–356 lines the ATP pocket; that stretch reads EISS. Ser389 is an L-serine binding site.

This sequence belongs to the class-II aminoacyl-tRNA synthetase family. Type-1 seryl-tRNA synthetase subfamily. Homodimer. The tRNA molecule binds across the dimer.

It is found in the cytoplasm. It catalyses the reaction tRNA(Ser) + L-serine + ATP = L-seryl-tRNA(Ser) + AMP + diphosphate + H(+). It carries out the reaction tRNA(Sec) + L-serine + ATP = L-seryl-tRNA(Sec) + AMP + diphosphate + H(+). The protein operates within aminoacyl-tRNA biosynthesis; selenocysteinyl-tRNA(Sec) biosynthesis; L-seryl-tRNA(Sec) from L-serine and tRNA(Sec): step 1/1. In terms of biological role, catalyzes the attachment of serine to tRNA(Ser). Is also able to aminoacylate tRNA(Sec) with serine, to form the misacylated tRNA L-seryl-tRNA(Sec), which will be further converted into selenocysteinyl-tRNA(Sec). In Haemophilus influenzae (strain PittGG), this protein is Serine--tRNA ligase.